Here is a 254-residue protein sequence, read N- to C-terminus: MGRGRVEMKRIENKINRQVTFSKRRAGLLKKAHEISILCDAEVSLIVFSHKGKLFEYSSESCMEKVLERYERYSYAEKQLKAPDSHVNAQTNWSMEYSRLKAKIELLERNQRHYLGEDLESISIKELQNLEQQLDTSLKHIRSRKNQLMHESLNHLQRKEKEILEENSMLTKQIKERESILRTHQNQSEQQNRSHHVAPQPQPQLNPYMISHQASPFLNMGGMYQGEDPTAVRRNRLDLTLEPIYNCNLGYFAA.

The 61-residue stretch at 1 to 61 (MGRGRVEMKR…GKLFEYSSES (61 aa)) folds into the MADS-box domain. A K-box domain is found at 90-180 (QTNWSMEYSR…TKQIKERESI (91 aa)). Positions 182–191 (RTHQNQSEQQ) are enriched in polar residues. The disordered stretch occupies residues 182–205 (RTHQNQSEQQNRSHHVAPQPQPQL).

Homodimer capable of binding to CArG-box sequences.

The protein localises to the nucleus. Probable transcription factor that promotes early floral meristem identity in synergy with APETALA1, FRUITFULL and LEAFY. Is required subsequently for the transition of an inflorescence meristem into a floral meristem. Seems to be partially redundant to the function of APETALA1. The polypeptide is Transcription factor CAULIFLOWER (CAL) (Brassica rapa subsp. chinensis (Pak-choi)).